We begin with the raw amino-acid sequence, 236 residues long: Purine nucleoside phosphorylase DeoD-type 2 (236 aa).

His-5 lines the a purine D-ribonucleoside pocket. Phosphate contacts are provided by residues Gly-21, Arg-25, Arg-44, and 88-91; that span reads RVGS. A purine D-ribonucleoside is bound by residues 180–182 and 204–205; these read DME and SD. The active-site Proton donor is the Asp-205.

This sequence belongs to the PNP/UDP phosphorylase family. Homohexamer; trimer of homodimers.

The catalysed reaction is a purine D-ribonucleoside + phosphate = a purine nucleobase + alpha-D-ribose 1-phosphate. The enzyme catalyses a purine 2'-deoxy-D-ribonucleoside + phosphate = a purine nucleobase + 2-deoxy-alpha-D-ribose 1-phosphate. In terms of biological role, catalyzes the reversible phosphorolytic breakdown of the N-glycosidic bond in the beta-(deoxy)ribonucleoside molecules, with the formation of the corresponding free purine bases and pentose-1-phosphate. This is Purine nucleoside phosphorylase DeoD-type 2 from Vibrio vulnificus (strain CMCP6).